The following is a 495-amino-acid chain: GTPase Der (495 aa).

EngA-type G domains lie at 3-166 and 208-381; these read PVVA…VQDE and IKLA…SCAT. Residues 9-16, 56-60, 118-121, 214-221, 261-265, and 326-329 each bind GTP; these read GRPNVGKS, DTGGI, NKTD, DTAGV, and NKWD. The 85-residue stretch at 382-466 folds into the KH-like domain; that stretch reads RRVSTAMLTR…PIRIQFKEGE (85 aa).

Belongs to the TRAFAC class TrmE-Era-EngA-EngB-Septin-like GTPase superfamily. EngA (Der) GTPase family. In terms of assembly, associates with the 50S ribosomal subunit.

Its function is as follows. GTPase that plays an essential role in the late steps of ribosome biogenesis. In Pectobacterium atrosepticum (strain SCRI 1043 / ATCC BAA-672) (Erwinia carotovora subsp. atroseptica), this protein is GTPase Der.